Reading from the N-terminus, the 316-residue chain is Transaldolase 2 (316 aa).

K131 functions as the Schiff-base intermediate with substrate in the catalytic mechanism.

This sequence belongs to the transaldolase family. Type 1 subfamily. Homodimer.

The protein localises to the cytoplasm. It catalyses the reaction D-sedoheptulose 7-phosphate + D-glyceraldehyde 3-phosphate = D-erythrose 4-phosphate + beta-D-fructose 6-phosphate. It functions in the pathway carbohydrate degradation; pentose phosphate pathway; D-glyceraldehyde 3-phosphate and beta-D-fructose 6-phosphate from D-ribose 5-phosphate and D-xylulose 5-phosphate (non-oxidative stage): step 2/3. Transaldolase is important for the balance of metabolites in the pentose-phosphate pathway. The protein is Transaldolase 2 of Salmonella paratyphi A (strain ATCC 9150 / SARB42).